We begin with the raw amino-acid sequence, 71 residues long: Small ribosomal subunit protein bS21 (71 aa).

Residues 49 to 59 (KAAAVKRAAKK) are compositionally biased toward basic residues. The interval 49 to 71 (KAAAVKRAAKKVSRENARRVRMY) is disordered. Over residues 60 to 71 (VSRENARRVRMY) the composition is skewed to basic and acidic residues.

It belongs to the bacterial ribosomal protein bS21 family.

This chain is Small ribosomal subunit protein bS21, found in Colwellia psychrerythraea (strain 34H / ATCC BAA-681) (Vibrio psychroerythus).